The primary structure comprises 242 residues: Uridylate kinase (242 aa).

11 to 14 is a binding site for ATP; that stretch reads KLSG. The involved in allosteric activation by GTP stretch occupies residues 19-24; sequence GDKGVG. Residue glycine 53 coordinates UMP. Residues glycine 54 and arginine 58 each contribute to the ATP site. Residues aspartate 73 and 134–141 each bind UMP; that span reads IGSPYFST. ATP contacts are provided by asparagine 162, tyrosine 168, and aspartate 171.

It belongs to the UMP kinase family. As to quaternary structure, homohexamer.

It is found in the cytoplasm. The enzyme catalyses UMP + ATP = UDP + ADP. It participates in pyrimidine metabolism; CTP biosynthesis via de novo pathway; UDP from UMP (UMPK route): step 1/1. With respect to regulation, allosterically activated by GTP. Inhibited by UTP. Functionally, catalyzes the reversible phosphorylation of UMP to UDP. The chain is Uridylate kinase from Streptococcus agalactiae serotype III (strain NEM316).